Consider the following 187-residue polypeptide: Protein canopy-1 (187 aa).

Positions 1–24 are cleaved as a signal peptide; that stretch reads MSPWIKHICLVLVAAFMLVKTTES. The Saposin B-type domain maps to 28-181; it reads EALYCSACMA…EVSDHCKSSV (154 aa). Cystine bridges form between C32-C177, C35-C170, and C90-C143. The short motif at 184 to 187 is the Prevents secretion from ER element; the sequence is HSEL.

The protein belongs to the canopy family. In terms of assembly, homodimer. Interacts with fgfr1.

It localises to the endoplasmic reticulum. In terms of biological role, involved in the maintenance of the midbrain-hindbrain boundary (MHB) organizer. Contributes to a positive-feedback loop of FGF signaling in the MHB, enabling the MHB to exert its role as an organizer for the tectal and cerebellar development. The protein is Protein canopy-1 (cnpy1) of Danio rerio (Zebrafish).